The sequence spans 476 residues: Cysteine--tRNA ligase (476 aa).

C28 contacts Zn(2+). The 'HIGH' region motif lies at 30–40; the sequence is PTVYDHTHLGH. Residues C208, H233, and E237 each contribute to the Zn(2+) site. Residues 265 to 269 carry the 'KMSKS' region motif; sequence KMSKS. ATP is bound at residue K268.

This sequence belongs to the class-I aminoacyl-tRNA synthetase family. Zn(2+) is required as a cofactor.

The protein localises to the cytoplasm. The catalysed reaction is tRNA(Cys) + L-cysteine + ATP = L-cysteinyl-tRNA(Cys) + AMP + diphosphate. This is Cysteine--tRNA ligase from Methanococcus maripaludis (strain C7 / ATCC BAA-1331).